Reading from the N-terminus, the 830-residue chain is GPI ethanolamine phosphate transferase 2 (830 aa).

The N-terminal stretch at 1 to 32 (MNLKQFTCLSCAQLLAILLFIFAFFPRKIVLT) is a signal peptide. The Lumenal segment spans residues 33–321 (GISKQDPDQD…QYLETVQQID (289 aa)). 3 N-linked (GlcNAc...) asparagine glycosylation sites follow: Asn-145, Asn-185, and Asn-298. The helical transmembrane segment at 322 to 342 (IVPTIAALFGMPIPMNSVGII) threads the bilayer. The Cytoplasmic segment spans residues 343 to 405 (IPDFLQLLPN…TKSATNYNYP (63 aa)). Residues 406 to 426 (LLTLAFVGFLIITIIAIYVLL) form a helical membrane-spanning segment. The Lumenal segment spans residues 427–439 (RYSGPDFWQLRVS). Residues 440-460 (SLSVLLVSIILGVSTFASSFI) form a helical membrane-spanning segment. The Cytoplasmic segment spans residues 461-469 (EEEHQLWWW). A helical membrane pass occupies residues 470–490 (IVTAFSAVPLFVYRLNVLIIV). Over 491–533 (RWFIMMACVRSIKFWNNSGQKFIYSNVMSNLLNQNPSWKWCLN) the chain is Lumenal. The N-linked (GlcNAc...) asparagine glycan is linked to Asn-506. Residues 534 to 554 (MLTFLVLIMASAGFQVLHFIV) traverse the membrane as a helical segment. At 555–598 (TTILVGLCFTYKISWEIVNGNQAEIPLFMHDLLAKIDFAPTESN) the chain is on the cytoplasmic side. The helical transmembrane segment at 599–619 (LIVLARVFFQAWAIVVISRLV) threads the bilayer. At 620–651 (LTKLKVLNKNYLIKDMKVYITILLMFQTSSQN) the chain is on the lumenal side. Residues 652–672 (IGQFLVFQILESQIFYFFQNI) traverse the membrane as a helical segment. Residues 673 to 682 (PTASLTSTSK) are Cytoplasmic-facing. Residues 683 to 703 (IYFSNLVSLILQNFTFFQFGG) traverse the membrane as a helical segment. Residues 704–724 (TNSISTIDLGNAYHGVSSDYN) are Lumenal-facing. The helical transmembrane segment at 725–745 (IYVVGILMSVANFAPAIYWSM) threads the bilayer. The Cytoplasmic portion of the chain corresponds to 746 to 768 (LPWSINYASIPAQVKLQTFIRSK). The chain crosses the membrane as a helical span at residues 769–789 (LPAFTYHCIFGTCLMTACVVL). Topologically, residues 790–805 (RFHLFIWSVFSPKLCY) are lumenal. The chain crosses the membrane as a helical span at residues 806–826 (FLGWNFVMGLLNGWLPELALL). Residues 827 to 830 (CALD) are Cytoplasmic-facing.

Belongs to the PIGG/PIGN/PIGO family. PIGG subfamily. Post-translationally, N-glycosylated.

It localises to the endoplasmic reticulum membrane. Its pathway is glycolipid biosynthesis; glycosylphosphatidylinositol-anchor biosynthesis. Ethanolamine phosphate transferase involved in glycosylphosphatidylinositol-anchor biosynthesis. Transfers ethanolamine phosphate to the GPI second mannose. Although not essential, addition of ethanolamine phosphate to the second mannose plays an important role in cell separation via the GPI-based modification of daughter-specific proteins. The polypeptide is GPI ethanolamine phosphate transferase 2 (LAS21) (Saccharomyces cerevisiae (strain ATCC 204508 / S288c) (Baker's yeast)).